The sequence spans 203 residues: ATP-dependent Clp protease proteolytic subunit (203 aa).

S107 serves as the catalytic Nucleophile. H132 is a catalytic residue.

This sequence belongs to the peptidase S14 family. As to quaternary structure, fourteen ClpP subunits assemble into 2 heptameric rings which stack back to back to give a disk-like structure with a central cavity, resembling the structure of eukaryotic proteasomes.

It localises to the cytoplasm. The enzyme catalyses Hydrolysis of proteins to small peptides in the presence of ATP and magnesium. alpha-casein is the usual test substrate. In the absence of ATP, only oligopeptides shorter than five residues are hydrolyzed (such as succinyl-Leu-Tyr-|-NHMec, and Leu-Tyr-Leu-|-Tyr-Trp, in which cleavage of the -Tyr-|-Leu- and -Tyr-|-Trp bonds also occurs).. Cleaves peptides in various proteins in a process that requires ATP hydrolysis. Has a chymotrypsin-like activity. Plays a major role in the degradation of misfolded proteins. The polypeptide is ATP-dependent Clp protease proteolytic subunit (Thermotoga maritima (strain ATCC 43589 / DSM 3109 / JCM 10099 / NBRC 100826 / MSB8)).